The sequence spans 472 residues: Poly(A) polymerase catalytic subunit (472 aa).

Catalysis depends on residues Asp194 and Asp196.

This sequence belongs to the poxviridae poly(A) polymerase catalytic subunit family. Heterodimer of a large (catalytic) subunit and a small (regulatory) subunit.

It catalyses the reaction RNA(n) + ATP = RNA(n)-3'-adenine ribonucleotide + diphosphate. In terms of biological role, polymerase that creates the 3'-poly(A) tail of mRNA's. In Serinus (CNPV), this protein is Poly(A) polymerase catalytic subunit (PAPL).